The primary structure comprises 129 residues: Large ribosomal subunit protein bL19 (129 aa).

This sequence belongs to the bacterial ribosomal protein bL19 family.

Functionally, this protein is located at the 30S-50S ribosomal subunit interface and may play a role in the structure and function of the aminoacyl-tRNA binding site. In Paraburkholderia phytofirmans (strain DSM 17436 / LMG 22146 / PsJN) (Burkholderia phytofirmans), this protein is Large ribosomal subunit protein bL19.